The primary structure comprises 84 residues: Large ribosomal subunit protein bL27 (84 aa).

Residues 1 to 22 form a disordered region; it reads MAHKKAGGSTRNGRDSESKRLG.

The protein belongs to the bacterial ribosomal protein bL27 family.

The sequence is that of Large ribosomal subunit protein bL27 from Shewanella amazonensis (strain ATCC BAA-1098 / SB2B).